Consider the following 507-residue polypeptide: Secreted lipase ARB_01498 (507 aa).

An N-terminal signal peptide occupies residues 1-21 (MFVQLLTYGLVAASTLQGVFA). Ser-196 acts as the Acyl-ester intermediate in catalysis. N-linked (GlcNAc...) asparagine glycosylation is found at Asn-262, Asn-321, Asn-358, and Asn-416.

Belongs to the type-B carboxylesterase/lipase family.

It localises to the secreted. The enzyme catalyses a triacylglycerol + H2O = a diacylglycerol + a fatty acid + H(+). The protein is Secreted lipase ARB_01498 of Arthroderma benhamiae (strain ATCC MYA-4681 / CBS 112371) (Trichophyton mentagrophytes).